Here is a 239-residue protein sequence, read N- to C-terminus: Probable transcriptional regulatory protein lmo0369 (239 aa).

The protein belongs to the TACO1 family. YeeN subfamily.

It is found in the cytoplasm. This chain is Probable transcriptional regulatory protein lmo0369, found in Listeria monocytogenes serovar 1/2a (strain ATCC BAA-679 / EGD-e).